The chain runs to 248 residues: Tyrosine recombinase XerD-like (248 aa).

One can recognise a Core-binding (CB) domain in the interval 1–72; it reads MIAFIEPFLA…TVNQFLYYLY (72 aa). The Tyr recombinase domain maps to 92–248; the sequence is SLKPQLTRLD…PITLEKYYKM (157 aa). Arginine 213 is a catalytic residue. The active-site O-(3'-phospho-DNA)-tyrosine intermediate is the tyrosine 245.

This sequence belongs to the 'phage' integrase family. XerD-like subfamily.

The protein localises to the cytoplasm. In terms of biological role, putative tyrosine recombinase. Not involved in the cutting and rejoining of the recombining DNA molecules on dif(SL) site. The protein is Tyrosine recombinase XerD-like of Streptococcus equi subsp. zooepidemicus (strain MGCS10565).